The sequence spans 93 residues: Small ribosomal subunit protein uS19 (93 aa).

Belongs to the universal ribosomal protein uS19 family.

In terms of biological role, protein S19 forms a complex with S13 that binds strongly to the 16S ribosomal RNA. The sequence is that of Small ribosomal subunit protein uS19 from Geotalea daltonii (strain DSM 22248 / JCM 15807 / FRC-32) (Geobacter daltonii).